The primary structure comprises 628 residues: Alpha-L-arabinofuranosidase A (628 aa).

The signal sequence occupies residues 1-25 (MVAFSALSGVSALSLLLCLVQHAHG). 8 N-linked (GlcNAc...) asparagine glycosylation sites follow: asparagine 36, asparagine 51, asparagine 74, asparagine 152, asparagine 171, asparagine 260, asparagine 359, and asparagine 493.

It belongs to the glycosyl hydrolase 51 family.

It is found in the secreted. It carries out the reaction Hydrolysis of terminal non-reducing alpha-L-arabinofuranoside residues in alpha-L-arabinosides.. It functions in the pathway glycan metabolism; L-arabinan degradation. Functionally, alpha-L-arabinofuranosidase involved in the degradation of arabinoxylan, a major component of plant hemicellulose. Acts only on small linear 1,5-alpha-linked L-arabinofuranosyl oligosaccharides. In Aspergillus kawachii (strain NBRC 4308) (White koji mold), this protein is Alpha-L-arabinofuranosidase A (abfA).